The primary structure comprises 406 residues: MKAVIFIMDGLGDRPNKDGNTPLKEAKTPVMDKMAKDGICGLMNAVDVGVRPGSDTAHLAILGYDPYTTYTGRGPFEACGVGVTVKPGDIAFRCNFSSVNENFIVTDRRAGRIEDTSELEKELDGLKIDDIDIIFKESGGYRAALVLRGPGLSDKISDADPKKEGKRVKEIHPLDNSKEAKKTAEIVNKLLKIAYEKLDKHPVNEERRKQNLPVANMIVPRGVGQVPEIMQFSEKTGLKGACIAGTGLIKGIAKMVGLDVIDVEGCDGTPNSDLMAKACAIVETLKDYDFILVNVKGADEAGHDGNYELKKEIIEKIDEMLDYITKNIDKDEVYIAMSGDHSTPIEEMDHSADPLPILIWGKSVRVDDVEKFDEFSTYKGGLNWIKGTNIMPILMDLMSIAKKYGA.

The protein belongs to the BPG-independent phosphoglycerate mutase family. A-PGAM subfamily.

It carries out the reaction (2R)-2-phosphoglycerate = (2R)-3-phosphoglycerate. The protein operates within carbohydrate degradation; glycolysis; pyruvate from D-glyceraldehyde 3-phosphate: step 3/5. In terms of biological role, catalyzes the interconversion of 2-phosphoglycerate and 3-phosphoglycerate. This Methanococcus maripaludis (strain C5 / ATCC BAA-1333) protein is 2,3-bisphosphoglycerate-independent phosphoglycerate mutase.